The following is a 393-amino-acid chain: N-lysine methyltransferase KMT5A (393 aa).

Residues 68–88 are disordered; it reads PGPEMVERRGPGRPRTDGENV. Positions 72–85 are enriched in basic and acidic residues; the sequence is MVERRGPGRPRTDG. Position 100 is a phosphoserine (S100). Positions 134 to 163 form a coiled coil; sequence RKREEKRNAGNAVRSAMKSEEQKIKDARKG. A disordered region spans residues 135–241; the sequence is KREEKRNAGN…SRKSKAELQS (107 aa). Basic and acidic residues predominate over residues 150-162; the sequence is MKSEEQKIKDARK. Residue K162 is modified to N6-acetyllysine. T181 is subject to Phosphothreonine. Basic residues predominate over residues 197–213; it reads ALKKPIKGKQAPRKKAQ. An SET domain is found at 257–378; that stretch reads EGMKIDLIDG…AGEELLYDYG (122 aa). S-adenosyl-L-methionine is bound by residues 267–269, Y312, and 339–340; these read KGR and NH.

It belongs to the class V-like SAM-binding methyltransferase superfamily. Histone-lysine methyltransferase family. PR/SET subfamily. In terms of assembly, interacts with L3MBTL1. As to quaternary structure, interacts with SIRT2 (phosphorylated form); the interaction is direct, stimulates KMT5A-mediated methyltransferase activity at histone H4 'Lys-20' (H4K20me1) and is increased in a H(2)O(2)-induced oxidative stress-dependent manner. Acetylated at Lys-162; does not affect methyltransferase activity. Deacetylated at Lys-162 possibly by SIRT2; does not change methyltransferase activity. Post-translationally, ubiquitinated and degraded by the DCX(DTL) complex.

It localises to the nucleus. It is found in the chromosome. The enzyme catalyses L-lysyl(20)-[histone H4] + S-adenosyl-L-methionine = N(6)-methyl-L-lysyl(20)-[histone H4] + S-adenosyl-L-homocysteine + H(+). The catalysed reaction is L-lysyl-[protein] + S-adenosyl-L-methionine = N(6)-methyl-L-lysyl-[protein] + S-adenosyl-L-homocysteine + H(+). In terms of biological role, protein-lysine N-methyltransferase that monomethylates both histones and non-histone proteins. Specifically monomethylates 'Lys-20' of histone H4 (H4K20me1). H4K20me1 is enriched during mitosis and represents a specific tag for epigenetic transcriptional repression. Mainly functions in euchromatin regions, thereby playing a central role in the silencing of euchromatic genes. Required for cell proliferation, probably by contributing to the maintenance of proper higher-order structure of DNA during mitosis. Involved in chromosome condensation and proper cytokinesis. Nucleosomes are preferred as substrate compared to free histones. Mediates monomethylation of p53/TP53 at 'Lys-382', leading to repress p53/TP53-target genes. Plays a negative role in TGF-beta response regulation and a positive role in cell migration. This Homo sapiens (Human) protein is N-lysine methyltransferase KMT5A.